Consider the following 240-residue polypeptide: Large ribosomal subunit protein uL2 (240 aa).

Positions 1–11 are enriched in polar residues; that stretch reads MGKRLISQNRG. Disordered regions lie at residues 1–28 and 206–240; these read MGKR…KGAV and GGGR…TGRK. Basic residues-rich tracts occupy residues 13–28 and 224–240; these read GTPK…KGAV and SPGR…TGRK.

The protein belongs to the universal ribosomal protein uL2 family. As to quaternary structure, part of the 50S ribosomal subunit. Forms a bridge to the 30S subunit in the 70S ribosome.

Functionally, one of the primary rRNA binding proteins. Required for association of the 30S and 50S subunits to form the 70S ribosome, for tRNA binding and peptide bond formation. It has been suggested to have peptidyltransferase activity; this is somewhat controversial. Makes several contacts with the 16S rRNA in the 70S ribosome. The sequence is that of Large ribosomal subunit protein uL2 from Methanococcus maripaludis (strain C7 / ATCC BAA-1331).